A 101-amino-acid polypeptide reads, in one-letter code: Small ribosomal subunit protein uS14 (101 aa).

The protein belongs to the universal ribosomal protein uS14 family. Part of the 30S ribosomal subunit. Contacts proteins S3 and S10.

In terms of biological role, binds 16S rRNA, required for the assembly of 30S particles and may also be responsible for determining the conformation of the 16S rRNA at the A site. This is Small ribosomal subunit protein uS14 from Maricaulis maris (strain MCS10) (Caulobacter maris).